The primary structure comprises 192 residues: Ion-translocating oxidoreductase complex subunit B (192 aa).

The interval 1–26 (MNAIWIAVAAVSLLGLAFGAILGYAS) is hydrophobic. A 4Fe-4S domain is found at 32-91 (EDDPVVEKIDEILPQSQCGQCGYPGCRPYAEAISCNGEKINRCAPGGEAVMLKIAELLNV). Residues Cys-49, Cys-52, Cys-57, Cys-74, Cys-117, Cys-120, Cys-123, Cys-127, Cys-147, Cys-150, Cys-153, and Cys-157 each coordinate [4Fe-4S] cluster. 4Fe-4S ferredoxin-type domains are found at residues 108 to 137 (MVAF…GATR) and 138 to 167 (AMHT…LQPV).

This sequence belongs to the 4Fe4S bacterial-type ferredoxin family. RnfB subfamily. The complex is composed of six subunits: RsxA, RsxB, RsxC, RsxD, RsxE and RsxG. It depends on [4Fe-4S] cluster as a cofactor.

Its subcellular location is the cell inner membrane. Its function is as follows. Part of a membrane-bound complex that couples electron transfer with translocation of ions across the membrane. Required to maintain the reduced state of SoxR. This chain is Ion-translocating oxidoreductase complex subunit B, found in Escherichia coli O17:K52:H18 (strain UMN026 / ExPEC).